A 513-amino-acid chain; its full sequence is Cytochrome P450 monooxygenase orf3 (513 aa).

The chain crosses the membrane as a helical span at residues 11-31 (LVALGLIAATIIIYSFTLTVY). N-linked (GlcNAc...) asparagine glycosylation is found at asparagine 211 and asparagine 351. Residue cysteine 455 coordinates heme.

This sequence belongs to the cytochrome P450 family. Heme serves as cofactor.

It is found in the membrane. Its pathway is mycotoxin biosynthesis. Its function is as follows. Cytochrome P450 monooxygenase; part of the gene cluster that mediates the biosynthesis of brefeldin A (BFA), a protein transport inhibitor that shows antiviral, antifungal, and antitumor properties. The proposed biosynthesis of BFA involves formation of an acyclic polyketide chain that is differentially tailored throughout the backbone. The highly reducing polyketide synthase Bref-PKS is proposed to synthesize the precisely reduced octaketide precursor, which could then be directly offloaded by the thiohydrolase enzyme Bref-TH followed by a cytochrome P450 monooxygenase-mediated formation of the cyclopentane ring and macrocyclization to afford 7-deoxy BFA. Alternatively, the first ring annulation can also occur on the ACP-tethered intermediate before the thiohydrolase release and lactonization. The C7-hydroxylation by another cytochrome P450 monooxygenase is believed to be the final step in the process to obtain the final structure of BFA. In addition to the HRPKS Bref-PKS and the thiohydrolase Bref-TH, the brefeldin A biosynthesis cluster contains 4 cytochrome p450 monooxygenases (called orf3 to orf6), as well a the probable cluster-specific transcription regulator orf8. In Eupenicillium brefeldianum (Penicillium brefeldianum), this protein is Cytochrome P450 monooxygenase orf3.